We begin with the raw amino-acid sequence, 678 residues long: DNA ligase (678 aa).

Residues Asp34–Asp38, Ser83–Leu84, and Glu114 contribute to the NAD(+) site. Lys116 functions as the N6-AMP-lysine intermediate in the catalytic mechanism. Residues Arg137, Glu176, Lys293, and Lys317 each coordinate NAD(+). Positions 411, 414, 429, and 435 each coordinate Zn(2+). Positions Pro594–Ser678 constitute a BRCT domain.

It belongs to the NAD-dependent DNA ligase family. LigA subfamily. Mg(2+) is required as a cofactor. Requires Mn(2+) as cofactor.

It catalyses the reaction NAD(+) + (deoxyribonucleotide)n-3'-hydroxyl + 5'-phospho-(deoxyribonucleotide)m = (deoxyribonucleotide)n+m + AMP + beta-nicotinamide D-nucleotide.. Functionally, DNA ligase that catalyzes the formation of phosphodiester linkages between 5'-phosphoryl and 3'-hydroxyl groups in double-stranded DNA using NAD as a coenzyme and as the energy source for the reaction. It is essential for DNA replication and repair of damaged DNA. In Acinetobacter baumannii (strain AB307-0294), this protein is DNA ligase.